Consider the following 202-residue polypeptide: Energy-coupling factor transporter transmembrane protein BioN (202 aa).

The next 3 membrane-spanning stretches (helical) occupy residues 21–40 (LLSLTAFAILLFISHNLLLL), 44–63 (VLVAAVLYGTVGLPIGEALL), and 68–90 (IFLTIAVVALFNLIFNPWQAALV).

This sequence belongs to the CbiQ family. Part of a biotin transporter complex composed of BioM, BioN and BioY.

The protein resides in the cell inner membrane. Involved in biotin uptake. This chain is Energy-coupling factor transporter transmembrane protein BioN (bioN), found in Rhizobium etli (strain ATCC 51251 / DSM 11541 / JCM 21823 / NBRC 15573 / CFN 42).